Consider the following 149-residue polypeptide: Urease accessory protein UreE (149 aa).

Belongs to the UreE family.

The protein resides in the cytoplasm. In terms of biological role, involved in urease metallocenter assembly. Binds nickel. Probably functions as a nickel donor during metallocenter assembly. In Prochlorococcus marinus (strain MIT 9312), this protein is Urease accessory protein UreE.